Reading from the N-terminus, the 275-residue chain is ATP synthase subunit delta (275 aa).

Belongs to the ATPase delta chain family. In terms of assembly, F-type ATPases have 2 components, F(1) - the catalytic core - and F(0) - the membrane proton channel. F(1) has five subunits: alpha(3), beta(3), gamma(1), delta(1), epsilon(1). F(0) has three main subunits: a(1), b(2) and c(10-14). The alpha and beta chains form an alternating ring which encloses part of the gamma chain. F(1) is attached to F(0) by a central stalk formed by the gamma and epsilon chains, while a peripheral stalk is formed by the delta and b chains.

The protein resides in the cell membrane. F(1)F(0) ATP synthase produces ATP from ADP in the presence of a proton or sodium gradient. F-type ATPases consist of two structural domains, F(1) containing the extramembraneous catalytic core and F(0) containing the membrane proton channel, linked together by a central stalk and a peripheral stalk. During catalysis, ATP synthesis in the catalytic domain of F(1) is coupled via a rotary mechanism of the central stalk subunits to proton translocation. In terms of biological role, this protein is part of the stalk that links CF(0) to CF(1). It either transmits conformational changes from CF(0) to CF(1) or is implicated in proton conduction. The chain is ATP synthase subunit delta from Pseudarthrobacter chlorophenolicus (strain ATCC 700700 / DSM 12829 / CIP 107037 / JCM 12360 / KCTC 9906 / NCIMB 13794 / A6) (Arthrobacter chlorophenolicus).